The primary structure comprises 170 residues: UPF0251 protein MA_1017 (170 aa).

This sequence belongs to the UPF0251 family.

This chain is UPF0251 protein MA_1017, found in Methanosarcina acetivorans (strain ATCC 35395 / DSM 2834 / JCM 12185 / C2A).